Reading from the N-terminus, the 355-residue chain is Elongation factor Ts (355 aa).

An involved in Mg(2+) ion dislocation from EF-Tu region spans residues Thr82–Val85.

Belongs to the EF-Ts family.

It localises to the cytoplasm. In terms of biological role, associates with the EF-Tu.GDP complex and induces the exchange of GDP to GTP. It remains bound to the aminoacyl-tRNA.EF-Tu.GTP complex up to the GTP hydrolysis stage on the ribosome. The chain is Elongation factor Ts from Helicobacter pylori (strain HPAG1).